A 398-amino-acid chain; its full sequence is Serine/threonine-protein phosphatase 4 regulatory subunit 2-B (398 aa).

The tract at residues 138–398 is disordered; the sequence is SSEKNTSPSL…NAPEEPMEQD (261 aa). 3 stretches are compositionally biased toward polar residues: residues 139–149, 156–170, and 183–193; these read SEKNTSPSLNR, PSNSQSYTDRSNVNG, and TLSSPMNTNGL. The span at 197 to 211 shows a compositional bias: basic and acidic residues; sequence MENKESDLQQKEKSL. The segment covering 278–294 has biased composition (polar residues); the sequence is ASTSADKGKESCQTAQT. The segment covering 338 to 366 has biased composition (low complexity); it reads SESACSLNSEEPNSAAAAASTAGTDSSEG.

It belongs to the PPP4R2 family. In terms of assembly, serine/threonine-protein phosphatase 4 (PP4) occurs in different assemblies of the catalytic and one or more regulatory subunits.

Regulatory subunit of serine/threonine-protein phosphatase 4 (PP4). The sequence is that of Serine/threonine-protein phosphatase 4 regulatory subunit 2-B (ppp4r2-b) from Xenopus laevis (African clawed frog).